The following is a 418-amino-acid chain: Beta-arrestin-1 (418 aa).

The segment at 1–163 (MGDKGTRVFK…LEEKIHKRNS (163 aa)) is interaction with SRC. Residues 45–86 (PEYLKERRVYVTLTCAFRYGREDLDVLGLTFRKDLFVANVQS) form an interaction with CHRM2 region. A Phosphotyrosine modification is found at Y47. Positions 250, 255, 324, and 326 each coordinate 1D-myo-inositol hexakisphosphate. The interval 318 to 418 (IVSYKVKVKL…GTGSPRLNDR (101 aa)) is interaction with TRAF6. Residues 353 to 375 (HPKPKEEPPHREVPEHETPVDTN) are disordered. Basic and acidic residues predominate over residues 355-371 (KPKEEPPHREVPEHETP). A [DE]-X(1,2)-F-X-X-[FL]-X-X-X-R motif motif is present at residues 385 to 395 (DIVFEDFARQR). The interval 397 to 418 (KGMKDDKEEEEDGTGSPRLNDR) is disordered. S412 carries the post-translational modification Phosphoserine; by GRK5.

Belongs to the arrestin family. Monomer. Homodimer. Homooligomer; the self-association is mediated by InsP6-binding. Heterooligomer with ARRB2; the association is mediated by InsP6-binding. Interacts with ADRB2 (phosphorylated). Interacts with CHRM2 (phosphorylated). Interacts with LHCGR. Interacts with CYTH2 and CASR. Interacts with AP2B1 (dephosphorylated at 'Tyr-737'); phosphorylation of AP2B1 at 'Tyr-737' disrupts the interaction. Interacts (dephosphorylated at Ser-412) with CLTC. Interacts with CCR2 and GRK2. Interacts with CRR5. Interacts with PTAFR (phosphorylated on serine residues). Interacts with CLTC and MAP2K3. Interacts with CREB1. Interacts with TRAF6. Interacts with IGF1R and MDM2. Interacts with C5AR1. Interacts with PDE4D. Interacts with SRC (via the SH3 domain and the protein kinase domain); the interaction is independent of the phosphorylation state of SRC C-terminus. Interacts with TACR1. Interacts with RAF1. Interacts with CHUK, IKBKB and MAP3K14. Interacts with DVL1; the interaction is enhanced by phosphorylation of DVL1. Interacts with DVL2; the interaction is enhanced by phosphorylation of DVL2. Interacts with IGF1R. Associates with MAP kinase p38. Part of a MAPK signaling complex consisting of TACR1, ARRB1, SRC, MAPK1 (activated) and MAPK3 (activated). Part of a MAPK signaling complex consisting of F2RL1, ARRB1, RAF1, MAPK1 (activated) and MAPK3 (activated). Interacts with GPR143. Interacts with MAP2K4/MKK4. Interacts with HCK and CXCR1 (phosphorylated). Interacts with ACKR3 and ACKR4. Interacts with ARRDC1; the interaction is direct. Interacts with GPR61, GPR62 and GPR135. Post-translationally, constitutively phosphorylated at Ser-412 in the cytoplasm. At the plasma membrane, is rapidly dephosphorylated, a process that is required for clathrin binding and ADRB2 endocytosis but not for ADRB2 binding and desensitization. Once internalized, is rephosphorylated. The ubiquitination status appears to regulate the formation and trafficking of beta-arrestin-GPCR complexes and signaling. Ubiquitination appears to occur GPCR-specific. Ubiquitinated by MDM2; the ubiquitination is required for rapid internalization of ADRB2. Deubiquitinated by USP33; the deubiquitination leads to a dissociation of the beta-arrestin-GPCR complex. Stimulation of a class A GPCR, such as ADRB2, induces transient ubiquitination and subsequently promotes association with USP33. In terms of tissue distribution, beta-arrestin 1A is found in cortex, cerebellum, striatum, pineal gland, retina and heart. Beta-arrestin 1B is found in spleen, lung, pituitary and kidney.

It is found in the cytoplasm. Its subcellular location is the nucleus. The protein resides in the cell membrane. It localises to the membrane. The protein localises to the clathrin-coated pit. It is found in the cell projection. Its subcellular location is the pseudopodium. The protein resides in the cytoplasmic vesicle. Functionally, functions in regulating agonist-mediated G-protein coupled receptor (GPCR) signaling by mediating both receptor desensitization and resensitization processes. During homologous desensitization, beta-arrestins bind to the GPRK-phosphorylated receptor and sterically preclude its coupling to the cognate G-protein; the binding appears to require additional receptor determinants exposed only in the active receptor conformation. The beta-arrestins target many receptors for internalization by acting as endocytic adapters (CLASPs, clathrin-associated sorting proteins) and recruiting the GPRCs to the adapter protein 2 complex 2 (AP-2) in clathrin-coated pits (CCPs). However, the extent of beta-arrestin involvement appears to vary significantly depending on the receptor, agonist and cell type. Internalized arrestin-receptor complexes traffic to intracellular endosomes, where they remain uncoupled from G-proteins. Two different modes of arrestin-mediated internalization occur. Class A receptors, like ADRB2, OPRM1, ENDRA, D1AR and ADRA1B dissociate from beta-arrestin at or near the plasma membrane and undergo rapid recycling. Class B receptors, like AVPR2, AGTR1, NTSR1, TRHR and TACR1 internalize as a complex with arrestin and traffic with it to endosomal vesicles, presumably as desensitized receptors, for extended periods of time. Receptor resensitization then requires that receptor-bound arrestin is removed so that the receptor can be dephosphorylated and returned to the plasma membrane. Involved in internalization of P2RY4 and UTP-stimulated internalization of P2RY2. Involved in phosphorylation-dependent internalization of OPRD1 ands subsequent recycling. Involved in the degradation of cAMP by recruiting cAMP phosphodiesterases to ligand-activated receptors. Beta-arrestins function as multivalent adapter proteins that can switch the GPCR from a G-protein signaling mode that transmits short-lived signals from the plasma membrane via small molecule second messengers and ion channels to a beta-arrestin signaling mode that transmits a distinct set of signals that are initiated as the receptor internalizes and transits the intracellular compartment. Acts as a signaling scaffold for MAPK pathways such as MAPK1/3 (ERK1/2). ERK1/2 activated by the beta-arrestin scaffold is largely excluded from the nucleus and confined to cytoplasmic locations such as endocytic vesicles, also called beta-arrestin signalosomes. Recruits c-Src/SRC to ADRB2 resulting in ERK activation. GPCRs for which the beta-arrestin-mediated signaling relies on both ARRB1 and ARRB2 (codependent regulation) include ADRB2, F2RL1 and PTH1R. For some GPCRs the beta-arrestin-mediated signaling relies on either ARRB1 or ARRB2 and is inhibited by the other respective beta-arrestin form (reciprocal regulation). Inhibits ERK1/2 signaling in AGTR1- and AVPR2-mediated activation (reciprocal regulation). Is required for SP-stimulated endocytosis of NK1R and recruits c-Src/SRC to internalized NK1R resulting in ERK1/2 activation, which is required for the antiapoptotic effects of SP. Is involved in proteinase-activated F2RL1-mediated ERK activity. Acts as a signaling scaffold for the AKT1 pathway. Is involved in alpha-thrombin-stimulated AKT1 signaling. Is involved in IGF1-stimulated AKT1 signaling leading to increased protection from apoptosis. Involved in activation of the p38 MAPK signaling pathway and in actin bundle formation. Involved in F2RL1-mediated cytoskeletal rearrangement and chemotaxis. Involved in AGTR1-mediated stress fiber formation by acting together with GNAQ to activate RHOA. Appears to function as signaling scaffold involved in regulation of MIP-1-beta-stimulated CCR5-dependent chemotaxis. Involved in attenuation of NF-kappa-B-dependent transcription in response to GPCR or cytokine stimulation by interacting with and stabilizing CHUK. May serve as nuclear messenger for GPCRs. Involved in OPRD1-stimulated transcriptional regulation by translocating to CDKN1B and FOS promoter regions and recruiting EP300 resulting in acetylation of histone H4. Involved in regulation of LEF1 transcriptional activity via interaction with DVL1 and/or DVL2 Also involved in regulation of receptors other than GPCRs. Involved in Toll-like receptor and IL-1 receptor signaling through the interaction with TRAF6 which prevents TRAF6 autoubiquitination and oligomerization required for activation of NF-kappa-B and JUN. Involved in IL8-mediated granule release in neutrophils. Binds phosphoinositides. Binds inositol hexakisphosphate (InsP6). Required for atypical chemokine receptor ACKR2-induced RAC1-LIMK1-PAK1-dependent phosphorylation of cofilin (CFL1) and for the up-regulation of ACKR2 from endosomal compartment to cell membrane, increasing its efficiency in chemokine uptake and degradation. Involved in the internalization of the atypical chemokine receptor ACKR3. Negatively regulates the NOTCH signaling pathway by mediating the ubiquitination and degradation of NOTCH1 by ITCH. Participates in the recruitment of the ubiquitin-protein ligase to the receptor. This chain is Beta-arrestin-1 (ARRB1), found in Bos taurus (Bovine).